The primary structure comprises 572 residues: Proline--tRNA ligase (572 aa).

It belongs to the class-II aminoacyl-tRNA synthetase family. ProS type 1 subfamily. In terms of assembly, homodimer.

The protein localises to the cytoplasm. The enzyme catalyses tRNA(Pro) + L-proline + ATP = L-prolyl-tRNA(Pro) + AMP + diphosphate. In terms of biological role, catalyzes the attachment of proline to tRNA(Pro) in a two-step reaction: proline is first activated by ATP to form Pro-AMP and then transferred to the acceptor end of tRNA(Pro). As ProRS can inadvertently accommodate and process non-cognate amino acids such as alanine and cysteine, to avoid such errors it has two additional distinct editing activities against alanine. One activity is designated as 'pretransfer' editing and involves the tRNA(Pro)-independent hydrolysis of activated Ala-AMP. The other activity is designated 'posttransfer' editing and involves deacylation of mischarged Ala-tRNA(Pro). The misacylated Cys-tRNA(Pro) is not edited by ProRS. In Yersinia pseudotuberculosis serotype O:1b (strain IP 31758), this protein is Proline--tRNA ligase.